A 259-amino-acid chain; its full sequence is Small ribosomal subunit protein uS2 (259 aa).

The segment at 228-259 (VSFGSEEAEENNQKEDNEEIFEIEDVDESEEM) is disordered. Residues 233 to 259 (EEAEENNQKEDNEEIFEIEDVDESEEM) show a composition bias toward acidic residues.

It belongs to the universal ribosomal protein uS2 family.

The protein is Small ribosomal subunit protein uS2 of Thermosipho africanus (strain TCF52B).